The chain runs to 879 residues: Alanine--tRNA ligase (879 aa).

Residues histidine 566, histidine 570, cysteine 668, and histidine 672 each contribute to the Zn(2+) site.

Belongs to the class-II aminoacyl-tRNA synthetase family. The cofactor is Zn(2+).

Its subcellular location is the cytoplasm. The catalysed reaction is tRNA(Ala) + L-alanine + ATP = L-alanyl-tRNA(Ala) + AMP + diphosphate. Its function is as follows. Catalyzes the attachment of alanine to tRNA(Ala) in a two-step reaction: alanine is first activated by ATP to form Ala-AMP and then transferred to the acceptor end of tRNA(Ala). Also edits incorrectly charged Ser-tRNA(Ala) and Gly-tRNA(Ala) via its editing domain. This chain is Alanine--tRNA ligase, found in Halalkalibacterium halodurans (strain ATCC BAA-125 / DSM 18197 / FERM 7344 / JCM 9153 / C-125) (Bacillus halodurans).